The primary structure comprises 634 residues: Sodium-dependent multivitamin transporter (634 aa).

12 consecutive transmembrane segments (helical) span residues 23–43, 65–85, 100–120, 142–162, 175–195, 207–227, 255–275, 295–315, 350–370, 403–423, 427–447, and 455–475; these read FSVV…VIGL, MGCL…VAIL, FLGC…IPVF, ICGT…ALYA, LWLS…LGGL, LVMF…VGGL, FWTL…VNQA, AVFP…LVMF, LPGL…SSAF, FAYG…GSVL, LSIF…GLFF, and AIVG…GSIV. 2 N-linked (GlcNAc...) asparagine glycosylation sites follow: N488 and N497. Residues 526–546 traverse the membrane as a helical segment; it reads LWYSAHNSTTVIVVGLIVSLL.

Belongs to the sodium:solute symporter (SSF) (TC 2.A.21) family. Interacts with PDZD11. Expressed in the intestinal mucosa, liver and kidney (at protein level). Expressed in the colon.

The protein localises to the cell membrane. It is found in the apical cell membrane. It catalyses the reaction biotin(out) + 2 Na(+)(out) = biotin(in) + 2 Na(+)(in). The catalysed reaction is (R)-pantothenate(out) + 2 Na(+)(out) = (R)-pantothenate(in) + 2 Na(+)(in). The enzyme catalyses (R)-lipoate(out) + 2 Na(+)(out) = (R)-lipoate(in) + 2 Na(+)(in). It carries out the reaction iodide(out) + 2 Na(+)(out) = iodide(in) + 2 Na(+)(in). Sodium-dependent multivitamin transporter that mediates the electrogenic transport of pantothenate, biotin, lipoate and iodide. Functions as a Na(+)-coupled substrate symporter where the stoichiometry of Na(+):substrate is 2:1, creating an electrochemical Na(+) gradient used as driving force for substrate uptake. Required for biotin and pantothenate uptake in the intestine across the brush border membrane. Plays a role in the maintenance of intestinal mucosa integrity, by providing the gut mucosa with biotin. Contributes to the luminal uptake of biotin and pantothenate into the brain across the blood-brain barrier. The polypeptide is Sodium-dependent multivitamin transporter (Mus musculus (Mouse)).